A 459-amino-acid polypeptide reads, in one-letter code: Putrescine aminotransferase (459 aa).

Pyridoxal 5'-phosphate-binding positions include 150–151 and Gln274; that span reads GT. Residue Lys300 is modified to N6-(pyridoxal phosphate)lysine. Thr332 contacts pyridoxal 5'-phosphate.

This sequence belongs to the class-III pyridoxal-phosphate-dependent aminotransferase family. Putrescine aminotransferase subfamily. Pyridoxal 5'-phosphate serves as cofactor.

The catalysed reaction is an alkane-alpha,omega-diamine + 2-oxoglutarate = an omega-aminoaldehyde + L-glutamate. It catalyses the reaction putrescine + 2-oxoglutarate = 1-pyrroline + L-glutamate + H2O. The enzyme catalyses cadaverine + 2-oxoglutarate = 5-aminopentanal + L-glutamate. Its pathway is amine and polyamine degradation; putrescine degradation; 4-aminobutanal from putrescine (transaminase route): step 1/1. Its function is as follows. Catalyzes the aminotransferase reaction from putrescine to 2-oxoglutarate, leading to glutamate and 4-aminobutanal, which spontaneously cyclizes to form 1-pyrroline. This is the first step in one of two pathways for putrescine degradation, where putrescine is converted into 4-aminobutanoate (gamma-aminobutyrate or GABA) via 4-aminobutanal. Also functions as a cadaverine transaminase in a a L-lysine degradation pathway to succinate that proceeds via cadaverine, glutarate and L-2-hydroxyglutarate. This chain is Putrescine aminotransferase, found in Klebsiella pneumoniae subsp. pneumoniae (strain ATCC 700721 / MGH 78578).